We begin with the raw amino-acid sequence, 477 residues long: Protein RdxB (477 aa).

Residues 1-29 are Cytoplasmic-facing; it reads MTSPDTQTSSLYAKREPVFPKRVSGKFRS. A helical transmembrane segment spans residues 30 to 50; sequence LKWWIMGVTLGIYYIAPWLRW. Over 51 to 81 the chain is Periplasmic; sequence DRGPNLPDQAILVDLANRRFFFFMIEIWPHE. The chain crosses the membrane as a helical span at residues 82 to 102; sequence FYFVAGLLIMAGLGLFLFTSA. The Cytoplasmic segment spans residues 103–154; that stretch reads AGRVWCGYACPQTVWTDLFILVERWVEGDRNARIRLLRQRWDLEKTRKYLTK. The helical transmembrane segment at 155 to 175 threads the bilayer; sequence WTLWLLIGLATGGAWVFYFTD. Over 176–189 the chain is Periplasmic; that stretch reads APTLLVDLLTGNAH. Residues 190–210 form a helical membrane-spanning segment; the sequence is PVAYITMATLTATTFAFGGFA. Residues 211 to 338 lie on the Cytoplasmic side of the membrane; the sequence is REQICIYACP…SAWRHVFRLR (128 aa). In terms of domain architecture, 4Fe-4S ferredoxin-type spans 253–281; it reads EPLSPDQGDCIDCMACVNVCPMGIDIRDG. Residues C262, C265, C268, C272, C286, C289, C292, and C296 each coordinate [4Fe-4S] cluster. The helical transmembrane segment at 339–359 threads the bilayer; sequence TLIYTALWSGVGLALIVALFL. Residues 360–477 lie on the Periplasmic side of the membrane; the sequence is RSPIDINVTP…HDTIFNGRGN (118 aa).

[4Fe-4S] cluster is required as a cofactor.

Its subcellular location is the cell membrane. In terms of biological role, involved in a membrane generated redox signal; required to maintain repression of photosynthesis gene expression in the presence of oxygen. The chain is Protein RdxB (rdxB) from Cereibacter sphaeroides (strain ATCC 17023 / DSM 158 / JCM 6121 / CCUG 31486 / LMG 2827 / NBRC 12203 / NCIMB 8253 / ATH 2.4.1.) (Rhodobacter sphaeroides).